We begin with the raw amino-acid sequence, 400 residues long: Nicotinate phosphoribosyltransferase (400 aa).

Residue H220 is modified to Phosphohistidine; by autocatalysis.

Belongs to the NAPRTase family. Post-translationally, transiently phosphorylated on a His residue during the reaction cycle. Phosphorylation strongly increases the affinity for substrates and increases the rate of nicotinate D-ribonucleotide production. Dephosphorylation regenerates the low-affinity form of the enzyme, leading to product release.

The enzyme catalyses nicotinate + 5-phospho-alpha-D-ribose 1-diphosphate + ATP + H2O = nicotinate beta-D-ribonucleotide + ADP + phosphate + diphosphate. It participates in cofactor biosynthesis; NAD(+) biosynthesis; nicotinate D-ribonucleotide from nicotinate: step 1/1. Functionally, catalyzes the synthesis of beta-nicotinate D-ribonucleotide from nicotinate and 5-phospho-D-ribose 1-phosphate at the expense of ATP. The polypeptide is Nicotinate phosphoribosyltransferase (Shigella boydii serotype 18 (strain CDC 3083-94 / BS512)).